We begin with the raw amino-acid sequence, 118 residues long: Large ribosomal subunit protein bL20 (118 aa).

The protein belongs to the bacterial ribosomal protein bL20 family.

Its function is as follows. Binds directly to 23S ribosomal RNA and is necessary for the in vitro assembly process of the 50S ribosomal subunit. It is not involved in the protein synthesizing functions of that subunit. This chain is Large ribosomal subunit protein bL20, found in Shigella flexneri serotype 5b (strain 8401).